The primary structure comprises 554 residues: Glucose-binding protein GlcS (554 aa).

The Cytoplasmic segment spans residues 1-17 (MKRKYPYSLAKGLTSTQ). The helical transmembrane segment at 18–38 (IAVIVAVIVIVIIIGVVAGFV) threads the bilayer. Residues 39-525 (LTKGPSTTAV…YGLTNNTQKT (487 aa)) are Extracellular-facing. A helical membrane pass occupies residues 526–546 (SNSVMLFLLPFLALPLAIASI). The Cytoplasmic segment spans residues 547–554 (DNKYYLLK).

This sequence belongs to the bacterial solute-binding protein 1 family. The complex is composed of two ATP-binding proteins (GlcV), two transmembrane proteins (GlcT and GlcU) and a solute-binding protein (GlcS).

It localises to the cell membrane. With respect to regulation, binding of glucose is strongly inhibited by galactose and mannose. Functionally, part of the ABC transporter complex GlcSTUV involved in glucose uptake. Binds glucose. Can also bind galactose and mannose. This Saccharolobus solfataricus (strain ATCC 35092 / DSM 1617 / JCM 11322 / P2) (Sulfolobus solfataricus) protein is Glucose-binding protein GlcS.